The chain runs to 249 residues: Very-long-chain (3R)-3-hydroxyacyl-CoA dehydratase 1 (249 aa).

The interval 1–22 (MASSEEDGTNGGASEAGEEKEA) is disordered. The Cytoplasmic segment spans residues 1 to 36 (MASSEEDGTNGGASEAGEEKEAPGRRRRLGLLATVW). A helical transmembrane segment spans residues 37 to 56 (LTFYNIAMTAGWLVLAIAMV). Over 57–75 (RFYMEKGTHKGLYKSIQKT) the chain is Lumenal. The helical transmembrane segment at 76-92 (LKFFQTFALLEIVHCLI) threads the bilayer. The Cytoplasmic segment spans residues 93 to 102 (GIVPTSVIVA). The helical transmembrane segment at 103 to 120 (GVQVSSRIFMVWLITHSI) threads the bilayer. Residues 121-126 (KPIQNE) are Lumenal-facing. The chain crosses the membrane as a helical span at residues 127–141 (ESVVLFLVAWTVTEI). Residues 142–164 (TRYSFYTFSLLDHLPYFIKWARY) lie on the Cytoplasmic side of the membrane. Residues 165-182 (NFFIILYPVGVVGELLTI) form a helical membrane-spanning segment. Catalysis depends on residues Y171 and E178. The Lumenal segment spans residues 183–212 (YAALPYVKKTGMFSIRLPNKYNVSFDYYYF). An N-linked (GlcNAc...) asparagine glycan is attached at N204. Residues 213-230 (LLITMASYIPLFPQLYFH) form a helical membrane-spanning segment. The Cytoplasmic portion of the chain corresponds to 231 to 249 (MLRQRRKVLHGEVIVEKDD).

The protein belongs to the very long-chain fatty acids dehydratase HACD family. In terms of assembly, may interact with enzymes of the ELO family (including ELOVL1); with those enzymes that mediate condensation, the first of the four steps of the reaction cycle responsible for fatty acids elongation, may be part of a larger fatty acids elongase complex. Interacts with TECR. As to expression, skeletal muscle.

It is found in the endoplasmic reticulum membrane. The enzyme catalyses a very-long-chain (3R)-3-hydroxyacyl-CoA = a very-long-chain (2E)-enoyl-CoA + H2O. It carries out the reaction (3R)-hydroxyhexadecanoyl-CoA = (2E)-hexadecenoyl-CoA + H2O. It catalyses the reaction (3R)-hydroxyoctadecanoyl-CoA = (2E)-octadecenoyl-CoA + H2O. The catalysed reaction is (3R)-hydroxyeicosanoyl-CoA = (2E)-eicosenoyl-CoA + H2O. The enzyme catalyses (3R)-hydroxydocosanoyl-CoA = (2E)-docosenoyl-CoA + H2O. It carries out the reaction (3R)-hydroxytetracosanoyl-CoA = (2E)-tetracosenoyl-CoA + H2O. It catalyses the reaction (3R)-hydroxyhexacosanoyl-CoA = (2E)-hexacosenoyl-CoA + H2O. Its pathway is lipid metabolism; fatty acid biosynthesis. Catalyzes the third of the four reactions of the long-chain fatty acids elongation cycle. This endoplasmic reticulum-bound enzymatic process, allows the addition of two carbons to the chain of long- and very long-chain fatty acids/VLCFAs per cycle. This enzyme catalyzes the dehydration of the 3-hydroxyacyl-CoA intermediate into trans-2,3-enoyl-CoA, within each cycle of fatty acid elongation. Thereby, it participates in the production of VLCFAs of different chain lengths that are involved in multiple biological processes as precursors of membrane lipids and lipid mediators. In Canis lupus familiaris (Dog), this protein is Very-long-chain (3R)-3-hydroxyacyl-CoA dehydratase 1 (HACD1).